The following is a 387-amino-acid chain: 1-deoxy-D-xylulose 5-phosphate reductoisomerase (387 aa).

Residues T10, G11, I13, N38, and N122 each coordinate NADPH. 1-deoxy-D-xylulose 5-phosphate is bound at residue K123. E124 provides a ligand contact to NADPH. A Mn(2+)-binding site is contributed by D148. 1-deoxy-D-xylulose 5-phosphate contacts are provided by S149, E150, S174, and H197. E150 lines the Mn(2+) pocket. G203 serves as a coordination point for NADPH. 4 residues coordinate 1-deoxy-D-xylulose 5-phosphate: S210, N215, K216, and E219. Residue E219 participates in Mn(2+) binding.

This sequence belongs to the DXR family. The cofactor is Mg(2+). Mn(2+) serves as cofactor.

It catalyses the reaction 2-C-methyl-D-erythritol 4-phosphate + NADP(+) = 1-deoxy-D-xylulose 5-phosphate + NADPH + H(+). It functions in the pathway isoprenoid biosynthesis; isopentenyl diphosphate biosynthesis via DXP pathway; isopentenyl diphosphate from 1-deoxy-D-xylulose 5-phosphate: step 1/6. Catalyzes the NADPH-dependent rearrangement and reduction of 1-deoxy-D-xylulose-5-phosphate (DXP) to 2-C-methyl-D-erythritol 4-phosphate (MEP). This chain is 1-deoxy-D-xylulose 5-phosphate reductoisomerase, found in Ehrlichia canis (strain Jake).